Consider the following 278-residue polypeptide: HTH-type transcriptional activator RhaS (278 aa).

Residues 174–272 enclose the HTH araC/xylS-type domain; the sequence is NLLLAWLEDH…NWSPRDIRQG (99 aa). DNA-binding regions (H-T-H motif) lie at residues 191–212 and 239–262; these read DAVA…KQQT and VTDI…RREF.

In terms of assembly, binds DNA as a dimer.

The protein localises to the cytoplasm. Activates expression of the rhaBAD and rhaT operons. This is HTH-type transcriptional activator RhaS from Escherichia coli O157:H7.